Reading from the N-terminus, the 250-residue chain is Proteasome subunit alpha (250 aa).

It belongs to the peptidase T1A family. As to quaternary structure, the 20S proteasome core is composed of 14 alpha and 14 beta subunits that assemble into four stacked heptameric rings, resulting in a barrel-shaped structure. The two inner rings, each composed of seven catalytic beta subunits, are sandwiched by two outer rings, each composed of seven alpha subunits. The catalytic chamber with the active sites is on the inside of the barrel. Has a gated structure, the ends of the cylinder being occluded by the N-termini of the alpha-subunits. Is capped at one or both ends by the proteasome regulatory ATPase, PAN.

It localises to the cytoplasm. Its activity is regulated as follows. The formation of the proteasomal ATPase PAN-20S proteasome complex, via the docking of the C-termini of PAN into the intersubunit pockets in the alpha-rings, triggers opening of the gate for substrate entry. Interconversion between the open-gate and close-gate conformations leads to a dynamic regulation of the 20S proteasome proteolysis activity. Functionally, component of the proteasome core, a large protease complex with broad specificity involved in protein degradation. This Haloquadratum walsbyi (strain DSM 16790 / HBSQ001) protein is Proteasome subunit alpha.